The primary structure comprises 290 residues: Porphobilinogen deaminase (290 aa).

Residue Cys-237 is modified to S-(dipyrrolylmethanemethyl)cysteine.

It belongs to the HMBS family. As to quaternary structure, monomer. Dipyrromethane is required as a cofactor.

The enzyme catalyses 4 porphobilinogen + H2O = hydroxymethylbilane + 4 NH4(+). The protein operates within porphyrin-containing compound metabolism; protoporphyrin-IX biosynthesis; coproporphyrinogen-III from 5-aminolevulinate: step 2/4. In terms of biological role, tetrapolymerization of the monopyrrole PBG into the hydroxymethylbilane pre-uroporphyrinogen in several discrete steps. The protein is Porphobilinogen deaminase of Clostridium botulinum (strain 657 / Type Ba4).